Consider the following 478-residue polypeptide: Protein nucleotidyltransferase YdiU (478 aa).

The ATP site is built by G84, G86, R87, K107, D119, G120, R170, and R177. D246 functions as the Proton acceptor in the catalytic mechanism. The Mg(2+) site is built by N247 and D256. An ATP-binding site is contributed by D256.

The protein belongs to the SELO family. It depends on Mg(2+) as a cofactor. The cofactor is Mn(2+).

It carries out the reaction L-seryl-[protein] + ATP = 3-O-(5'-adenylyl)-L-seryl-[protein] + diphosphate. The enzyme catalyses L-threonyl-[protein] + ATP = 3-O-(5'-adenylyl)-L-threonyl-[protein] + diphosphate. It catalyses the reaction L-tyrosyl-[protein] + ATP = O-(5'-adenylyl)-L-tyrosyl-[protein] + diphosphate. The catalysed reaction is L-histidyl-[protein] + UTP = N(tele)-(5'-uridylyl)-L-histidyl-[protein] + diphosphate. It carries out the reaction L-seryl-[protein] + UTP = O-(5'-uridylyl)-L-seryl-[protein] + diphosphate. The enzyme catalyses L-tyrosyl-[protein] + UTP = O-(5'-uridylyl)-L-tyrosyl-[protein] + diphosphate. In terms of biological role, nucleotidyltransferase involved in the post-translational modification of proteins. It can catalyze the addition of adenosine monophosphate (AMP) or uridine monophosphate (UMP) to a protein, resulting in modifications known as AMPylation and UMPylation. This chain is Protein nucleotidyltransferase YdiU, found in Escherichia coli (strain ATCC 8739 / DSM 1576 / NBRC 3972 / NCIMB 8545 / WDCM 00012 / Crooks).